The sequence spans 434 residues: F-box/FBD/LRR-repeat protein At3g26920 (434 aa).

The 50-residue stretch at 16-65 (EDRISQLPEALLLQILSLLPTKEVVAVSVLAKRWRFLWKMVPSLEFFYYF) folds into the F-box domain. 7 LRR repeats span residues 69 to 95 (LERF…HLNM), 100 to 125 (DPRI…VLKV), 145 to 172 (TLEL…NLHE), 173 to 198 (VEFV…VIHQ), 219 to 244 (VIVE…KIEG), 265 to 290 (IIDV…SLKV), and 315 to 341 (TYKP…KIFD). The FBD domain maps to 353–403 (KWNEPKNVPECLLLHLETFVWTCYEGKLENEIELAKYILRNARRLKKATFS).

This is F-box/FBD/LRR-repeat protein At3g26920 from Arabidopsis thaliana (Mouse-ear cress).